The sequence spans 343 residues: Interferon-inducible protein AIM2 (343 aa).

One can recognise a Pyrin domain in the interval 1–87 (MESKYKEILL…AKRLQEEKEK (87 aa)). The 200-residue stretch at 138–337 (MVAQQESIRE…SGVHSTIKVI (200 aa)) folds into the HIN-200 domain.

Belongs to the HIN-200 family. As to quaternary structure, self-associates; forms homooligomers in response to cytosolic double-stranded DNA (dsDNA) and the dsDNA seems to serve as oligomerization platform. Component of AIM2 inflammasome, which consists of a signal sensor component (AIM2), an adapter (PYCARD/ASC), which recruits an effector pro-inflammatory caspase (CASP1). Interacts (via pyrin domain) with PYCARD/ASC (via pyrin domain); interaction is direct. Component of the AIM2 PANoptosome complex, a multiprotein complex that drives inflammatory cell death (PANoptosis). Interacts with PYDC5; disrupts assembly of the AIM2 inflammasome complex. Interacts with EIF2AK2/PKR. Interacts with MAPRE1. Interacts with IFI16. Interacts with isoform IFI16-beta of IFI16; preventing the interaction between AIM2 and PYCARD/ASC. Interacts with RACK1; promoting association with PP2A phosphatase and dephosphorylation of AKT1. Interacts with TRIM11; promoting AIM2 recruitment to autophagosomes and autophagy-dependent degradation. In terms of assembly, (Microbial infection) Interacts with human herpesvirus 8 protein SOX/ORF37; this interaction inhibits AIM2 polymerization and subsequent inflammasome activation. Post-translationally, degraded via selective autophagy following interaction with TRIM11. As to expression, expressed in spleen, small intestine, peripheral blood leukocytes, and testis.

It localises to the cytoplasm. The protein localises to the inflammasome. Its subcellular location is the nucleus. With respect to regulation, inactive in absence of double-stranded DNA (dsDNA). Homooligomerizes upon binding to dsDNA, dsDNA serving as an oligomerization platform. AIM2 requires large dsDNA to generate a structural template that couples dsDNA ligand-binding and homooligomerization. Homooligomerization is followed by recruitment of PYCARD/ASC to initiate speck formation (nucleation). AIM2 and PYCARD/ASC homooligomer filaments assemble bidirectionally and the recognition between AIM2 and PYCARD/ASC oligomers occurs in a head-to-tail manner. Clustered PYCARD/ASC nucleates the formation of CASP1 filaments through the interaction of their respective CARD domains, acting as a platform for CASP1 polymerization and activation. Active CASP1 then specifically processes protein precursors, such as gasdermin-D (GSDMD), IL1B and IL18, leading to the release of mature cytokines in the extracellular milieu or pyroptosis, depending on cell type. AIM2 can be activated in response to events that cause genomic DNA (HIV protease inhibitor nelfinavir) or mitochondrial DNA release in the cytoplasm (such as Perfluoroalkyl substance pollutants or cholesterol overload). Activation of the AIM2 inflammasome is inhibited by isoform IFI16-beta of IFI16, which prevents the interaction between AIM2 and PYCARD/ASC. Activation of the AIM2 inflammasome is inhibited by TRIM11, which promotes autophagy-dependent degradation of AIM2. Its function is as follows. Sensor component of the AIM2 inflammasome, which mediates inflammasome activation in response to the presence of double-stranded DNA (dsDNA) in the cytosol, leading to subsequent pyroptosis. Inflammasomes are supramolecular complexes that assemble in the cytosol in response to pathogens and other damage-associated signals and play critical roles in innate immunity and inflammation. Acts as a recognition receptor (PRR): specifically recognizes and binds dsDNA in the cytosol, and mediates the formation of the inflammasome polymeric complex composed of AIM2, CASP1 and PYCARD/ASC. Recruitment of pro-caspase-1 (proCASP1) to the AIM2 inflammasome promotes caspase-1 (CASP1) activation, which subsequently cleaves and activates inflammatory cytokines IL1B and IL18 and gasdermin-D (GSDMD), promoting cytokine secretion. In some cells, CASP1 activation mediates cleavage and activation of GSDMD, triggering pyroptosis without promoting cytokine secretion. Detects cytosolic dsDNA of viral and bacterial origin in a non-sequence-specific manner. Involved in the DNA damage response caused by acute ionizing radiation by mediating pyroptosis of intestinal epithelial cells and bone marrow cells in response to double-strand DNA breaks. Mechanistically, AIM2 senses DNA damage in the nucleus to mediate inflammasome assembly and inflammatory cell death. Also acts as a regulator of neurodevelopment via its role in the DNA damage response: acts by promoting neural cell death in response to DNA damage in the developing brain, thereby purging genetically compromised cells of the central nervous system. Pyroptosis mediated by the AIM2 inflammasome in response to DNA damage is dependent on GSDMD without involving IL1B and IL18 cytokine secretion. Also acts as a mediator of pyroptosis, necroptosis and apoptosis (PANoptosis), an integral part of host defense against pathogens, in response to bacterial infection. Can also trigger PYCARD/ASC-dependent, caspase-1-independent cell death that involves caspase-8 (CASP8). Functionally, also acts as a tumor suppressor independently of its role in inflammatory response. Able to suppress overt cell proliferation in enterocytes: restricts stem cell proliferation in the intestinal mucosa in an inflammasome-independent manner, contributing to a decrease in the likelihood of colorectal cancer development. AIM2 suppresses cell proliferation by inhibiting phosphorylation of AKT1 at 'Ser-473', preventing AKT1 activation and AKT-mTOR signaling pathway. Inhibits AKT1 phosphorylation both by inhibiting the activity of PRKDC/DNA-PK kinase and promoting dephosphorylation by PP2A phosphatase. Also acts as a key regulator of regulatory T-cells (Treg) homeostasis by promoting their stability: acts by preventing AKT1 activation. Its role in Treg homeostasis is important to restain autoimmune diseases. The chain is Interferon-inducible protein AIM2 from Homo sapiens (Human).